Reading from the N-terminus, the 890-residue chain is DNA mismatch repair protein MutS (890 aa).

An ATP-binding site is contributed by 607 to 614; sequence GPNMSGKS.

Belongs to the DNA mismatch repair MutS family.

Its function is as follows. This protein is involved in the repair of mismatches in DNA. It is possible that it carries out the mismatch recognition step. This protein has a weak ATPase activity. This chain is DNA mismatch repair protein MutS, found in Bacillus mycoides (strain KBAB4) (Bacillus weihenstephanensis).